The primary structure comprises 410 residues: Histone-lysine N-methyltransferase SUV39H2 (410 aa).

Residues 47–105 form the Chromo domain; it reads YEVEYLCDYKVVKDMEYYLVKWKGWPDSTNTWEPLQNLKCPLLLQQFSNDKHNYLSQVK. Residues 189–247 form the Pre-SET domain; it reads FGCSCTDCFFQKCCPAEAGVLLAYNKNQQIKIPPGTPIYECNSRCQCGPDCPNRIVQKG. Zn(2+) is bound by residues Cys-191, Cys-193, Cys-196, Cys-201, Cys-202, Cys-229, Cys-233, Cys-235, and Cys-239. An SET domain is found at 250 to 373; sequence YSLCIFRTSN…AGEELTFDYQ (124 aa). Residues 261–263 and 330–331 each bind S-adenosyl-L-methionine; these read RGW and NH. Residue Cys-333 participates in Zn(2+) binding. Tyr-372 contributes to the S-adenosyl-L-methionine binding site. Ser-381, Ser-384, and Ser-388 each carry phosphoserine. The 17-residue stretch at 394 to 410 folds into the Post-SET domain; it reads VRTVCKCGAVTCRGYLN. Position 398 (Cys-398) interacts with Zn(2+). Lys-399 contacts S-adenosyl-L-methionine. Zn(2+)-binding residues include Cys-400 and Cys-405.

This sequence belongs to the class V-like SAM-binding methyltransferase superfamily. Histone-lysine methyltransferase family. Suvar3-9 subfamily. Interacts with SMAD5. The large PER complex involved in the histone methylation is composed of at least PER2, CBX3, TRIM28, SUV39H1 and/or SUV39H2; CBX3 mediates the formation of the complex. Post-translationally, ubiquitinated by the DCX(DCAF13) E3 ubiquitin ligase complex, leading to its degradation.

It is found in the nucleus. It localises to the chromosome. Its subcellular location is the centromere. The catalysed reaction is L-lysyl(9)-[histone H3] + 3 S-adenosyl-L-methionine = N(6),N(6),N(6)-trimethyl-L-lysyl(9)-[histone H3] + 3 S-adenosyl-L-homocysteine + 3 H(+). Histone methyltransferase that specifically trimethylates 'Lys-9' of histone H3 using monomethylated H3 'Lys-9' as substrate. H3 'Lys-9' trimethylation represents a specific tag for epigenetic transcriptional repression by recruiting HP1 (CBX1, CBX3 and/or CBX5) proteins to methylated histones. Mainly functions in heterochromatin regions, thereby playing a central role in the establishment of constitutive heterochromatin at pericentric and telomere regions. H3 'Lys-9' trimethylation is also required to direct DNA methylation at pericentric repeats. SUV39H1 is targeted to histone H3 via its interaction with RB1 and is involved in many processes, such as cell cycle regulation, transcriptional repression and regulation of telomere length. May participate in regulation of higher-order chromatin organization during spermatogenesis. Recruited by the large PER complex to the E-box elements of the circadian target genes such as PER2 itself or PER1, contributes to the conversion of local chromatin to a heterochromatin-like repressive state through H3 'Lys-9' trimethylation. This is Histone-lysine N-methyltransferase SUV39H2 (SUV39H2) from Homo sapiens (Human).